The sequence spans 274 residues: Karrikin insensitive 2 receptor IA (274 aa).

S95 acts as the Nucleophile in catalysis. Residues D217 and H246 contribute to the active site.

The protein belongs to the AB hydrolase superfamily. In terms of assembly, interacts with MAX2A and MAX2B in the presence of (-)-germacrene D, thus forming an E3 SCF ubiquitin ligase complex (ASK-cullin-F-box) containing MAX2A or MAX2B and KAI2IA recognizing SMAX1A; this leads to the subsequent degradation of the transcriptional corepressor SMAX1A, thus triggering the activation of a downstream signaling cascade. As to expression, strongly expressed in stigma.

It localises to the nucleus. Its subcellular location is the cytoplasm. Its activity is regulated as follows. Hydrolysis activity toward yoshimulactone green (YLG), a fluorescent agonist to strigolactone receptor, is inhibited by (-)-germacrene D and GR24, a synthetic strigolactone analog. Hydrolase involved in the olfaction of sesquiterpene volatile organic compounds (VOCs) during volatile plant communication in a MAX2 proteins-dependent manner. Acts as a karrikin-insensitive receptor that stereospecifically perceives and binds to (-)-germacrene D, particularly in stigmas, and triggers a signaling cascade influencing plant fitness, as the result of reproductive organ growth-promoting effect; this process involves an interaction with MAX2 proteins (e.g. MAX2A and MAX2B) and the subsequent degradation of SMAX1a, a transcriptional corepressor. The polypeptide is Karrikin insensitive 2 receptor IA (Petunia hybrida (Petunia)).